The primary structure comprises 472 residues: MQIGKYSLGDPIAAIATALSPAALGIVRTSGEGAIDLASAIFSKPKKLKEAQGNSILHGWVLDPESKKEVDEVTVCVYREPKSFTGEDSVEFICHGGTAVVLKIYRLLIENGFRAAEGGEFTFRAFANGKADLTRAEAVNEIINSKTDINIELAAGRLSGNLFSGIEEIKHELTAVIAAADVEIEYPEDEETSQGAFSPDLILRIIEPLKDLADSWAAEKIFIQGAKVVLAGKTNAGKSSLFNALLKEDRAIVSDIHGTTRDWLEASLNFNGIPVSLYDTAGIRYTQDSIEAIGVERSLEMSRNADLILYLCDPKDILSAGSLNKDDSEFIKNAKAPVITVITKEDLLDTESKEKIKEILKAEKIAEPIIISSKASNGIKALSEKAYSVLAKNTGSSGFSKTASLGSERQRDAVQKALDVLQTAYQNSLEGFPLDLIVEDLEEALSFLGEITGEVRSDDILDKVFSGFCVGK.

Positions 28, 91, and 130 each coordinate (6S)-5-formyl-5,6,7,8-tetrahydrofolate. Positions 225-391 constitute a TrmE-type G domain; it reads GAKVVLAGKT…LSEKAYSVLA (167 aa). Asparagine 235 lines the K(+) pocket. Residues 235-240, 254-260, and 279-282 each bind GTP; these read NAGKSS, SDIHGTT, and DTAG. Serine 239 serves as a coordination point for Mg(2+). The K(+) site is built by serine 254, isoleucine 256, and threonine 259. Threonine 260 is a Mg(2+) binding site. Lysine 472 lines the (6S)-5-formyl-5,6,7,8-tetrahydrofolate pocket.

This sequence belongs to the TRAFAC class TrmE-Era-EngA-EngB-Septin-like GTPase superfamily. TrmE GTPase family. In terms of assembly, homodimer. Heterotetramer of two MnmE and two MnmG subunits. K(+) is required as a cofactor.

Its subcellular location is the cytoplasm. Functionally, exhibits a very high intrinsic GTPase hydrolysis rate. Involved in the addition of a carboxymethylaminomethyl (cmnm) group at the wobble position (U34) of certain tRNAs, forming tRNA-cmnm(5)s(2)U34. This Treponema denticola (strain ATCC 35405 / DSM 14222 / CIP 103919 / JCM 8153 / KCTC 15104) protein is tRNA modification GTPase MnmE.